The chain runs to 473 residues: Gamma-aminobutyric acid receptor subunit beta-3 (473 aa).

An N-terminal signal peptide occupies residues 1-25; the sequence is MWGFAGGRLFGIFSAPVLVAVVCCA. Topologically, residues 26 to 246 are extracellular; sequence QSVNDPGNMS…FRLKRNIGYF (221 aa). 2 N-linked (GlcNAc...) asparagine glycosylation sites follow: Asn33 and Asn105. Position 122 (Tyr122) interacts with histamine. Cys161 and Cys175 are oxidised to a cystine. Residue Asn174 is glycosylated (N-linked (GlcNAc...) asparagine). Positions 180, 182, and 227 each coordinate 4-aminobutanoate. Histamine-binding positions include 181–182 and Thr227; that span reads SY. The chain crosses the membrane as a helical span at residues 247–267; it reads ILQTYMPSILITILSWVSFWI. The Cytoplasmic segment spans residues 268–271; sequence NYDA. A helical transmembrane segment spans residues 272–292; that stretch reads SAARVALGITTVLTMTTINTH. At 293–304 the chain is on the extracellular side; sequence LRETLPKIPYVK. A helical transmembrane segment spans residues 305-328; the sequence is AIDMYLMGCFVFVFLALLEYAFVN. At 329 to 447 the chain is on the cytoplasmic side; that stretch reads YIFFGRGPQR…KIPDLTDVNA (119 aa). A helical transmembrane segment spans residues 448–470; that stretch reads IDRWSRIVFPFTFSLFNLVYWLY. At 471 to 473 the chain is on the extracellular side; it reads YVN.

The protein belongs to the ligand-gated ion channel (TC 1.A.9) family. Gamma-aminobutyric acid receptor (TC 1.A.9.5) subfamily. GABRB3 sub-subfamily. As to quaternary structure, heteropentamer, formed by a combination of alpha (GABRA1-6), beta (GABRB1-3), gamma (GABRG1-3), delta (GABRD), epsilon (GABRE), rho (GABRR1-3), pi (GABRP) and theta (GABRQ) chains, each subunit exhibiting distinct physiological and pharmacological properties. Can form functional homopentamers (in vitro). Interacts with UBQLN1. May interact with KIF21B. Identified in a complex of 720 kDa composed of LHFPL4, NLGN2, GABRA1, GABRB2, GABRG2 and GABRB3. Interacts with LHFPL4. Interacts with GIT1; this interaction is required for synaptic GABRB3 surface stability and inhibitory synapse strength.

It localises to the postsynaptic cell membrane. The protein resides in the cell membrane. Its subcellular location is the cytoplasmic vesicle membrane. It catalyses the reaction chloride(in) = chloride(out). Its activity is regulated as follows. Potentiated by histamine. Its function is as follows. Beta subunit of the heteropentameric ligand-gated chloride channel gated by gamma-aminobutyric acid (GABA), a major inhibitory neurotransmitter in the brain. GABA-gated chloride channels, also named GABA(A) receptors (GABAAR), consist of five subunits arranged around a central pore and contain GABA active binding site(s) located at the alpha and beta subunit interface(s). GABAARs containing beta-3/GABRB3 subunit are found at both synaptic and extrasynaptic sites. When activated by GABA, GABAARs selectively allow the flow of chloride anions across the cell membrane down their electrochemical gradient. Chloride influx into the postsynaptic neuron following GABAAR opening decreases the neuron ability to generate a new action potential, thereby reducing nerve transmission. GABAARs containing alpha-1 and beta-3 subunits exhibit synaptogenic activity; the gamma-2 subunit being necessary but not sufficient to induce rapid synaptic contacts formation. Extrasynaptic beta-3 receptors contribute to the tonic GABAergic inhibition. GABAARs containing alpha-1, beta-3 and epsilon subunits may permit spontaneous chloride channel activity while preserving the structural information required for GABA-gated openings. Beta-containing GABAARs can simultaneously bind GABA and histamine where histamine binds at the interface of two neighboring beta subunits, which may be involved in the regulation of sleep and wakefulness. Plays an important role in somatosensation and in the production of antinociception. The sequence is that of Gamma-aminobutyric acid receptor subunit beta-3 from Mus musculus (Mouse).